The following is a 385-amino-acid chain: ATP phosphoribosyltransferase regulatory subunit (385 aa).

It belongs to the class-II aminoacyl-tRNA synthetase family. HisZ subfamily. In terms of assembly, heteromultimer composed of HisG and HisZ subunits.

It is found in the cytoplasm. It functions in the pathway amino-acid biosynthesis; L-histidine biosynthesis; L-histidine from 5-phospho-alpha-D-ribose 1-diphosphate: step 1/9. Functionally, required for the first step of histidine biosynthesis. May allow the feedback regulation of ATP phosphoribosyltransferase activity by histidine. In Bordetella avium (strain 197N), this protein is ATP phosphoribosyltransferase regulatory subunit.